Here is a 332-residue protein sequence, read N- to C-terminus: NADH-quinone oxidoreductase subunit H (332 aa).

Transmembrane regions (helical) follow at residues 4-24 (FAFFALEALIKCIIIIAIFAS), 44-64 (IGPDMVGPFGLIQLVADMIKL), 78-98 (FIFAIAPLISAICAFVSLAAI), 120-140 (VALLFVIGTSGLCFYAVFLGG), 165-185 (VGALALIAIVMLVGSFSLVDI), 194-214 (FSWLIFKQPLAFVLFIIALFI), 255-275 (IAGAILVTLLFLGGFNGFWII), 279-299 (IMMIVKSSFIFFWYFWARAAF), and 312-332 (YLILIPLAVVNLLITALAVLL).

This sequence belongs to the complex I subunit 1 family. NDH-1 is composed of 14 different subunits. Subunits NuoA, H, J, K, L, M, N constitute the membrane sector of the complex.

The protein localises to the cell inner membrane. The enzyme catalyses a quinone + NADH + 5 H(+)(in) = a quinol + NAD(+) + 4 H(+)(out). Functionally, NDH-1 shuttles electrons from NADH, via FMN and iron-sulfur (Fe-S) centers, to quinones in the respiratory chain. The immediate electron acceptor for the enzyme in this species is believed to be ubiquinone. Couples the redox reaction to proton translocation (for every two electrons transferred, four hydrogen ions are translocated across the cytoplasmic membrane), and thus conserves the redox energy in a proton gradient. This subunit may bind ubiquinone. The sequence is that of NADH-quinone oxidoreductase subunit H from Campylobacter jejuni subsp. doylei (strain ATCC BAA-1458 / RM4099 / 269.97).